The following is a 227-amino-acid chain: 3,4-dihydroxy-2-butanone 4-phosphate synthase (227 aa).

D-ribulose 5-phosphate contacts are provided by residues 45–46 (RE), D50, 158–162 (RRGHT), and E182. E46 lines the Mg(2+) pocket. H161 lines the Mg(2+) pocket.

Belongs to the DHBP synthase family. Homodimer. It depends on Mg(2+) as a cofactor. Mn(2+) is required as a cofactor.

It carries out the reaction D-ribulose 5-phosphate = (2S)-2-hydroxy-3-oxobutyl phosphate + formate + H(+). It functions in the pathway cofactor biosynthesis; riboflavin biosynthesis; 2-hydroxy-3-oxobutyl phosphate from D-ribulose 5-phosphate: step 1/1. Functionally, catalyzes the conversion of D-ribulose 5-phosphate to formate and 3,4-dihydroxy-2-butanone 4-phosphate. The sequence is that of 3,4-dihydroxy-2-butanone 4-phosphate synthase from Ralstonia nicotianae (strain ATCC BAA-1114 / GMI1000) (Ralstonia solanacearum).